The primary structure comprises 470 residues: MSQNIGKISQVIGAVIDVEFEPGKLPPIYNALRVTNPSIDDKENNLVLEVAQHLGENSVRTIAMDSTDGLVRGQAAIDTGKQISVPVGRKTLGRILNVIGDPVDEMGPVGAEKEYGIHREAPAFVDQSTKVEAFTTGIKVVDLLAPYARGGKIGLFGGAGVGKTVLIMELINNIAMQHGGFSVFAGVGERTREGNDLWMEMKESGVLEKTALVYGQMNEPPGARARVALSALSIAEYFRDEEGQNVLLFIDNIFRFTQAGSEVSALLGRIPSAVGYQPTLATEMGELQERITSTNKGSITSVQAIYVPADDLTDPAPATAFAHLDATTVLSRQIAELGIYPAVDPLDSTSRILDPQVIGEEHYAIARQVQYVLQKYKDLQDIIAILGMDELSEEDKLVVARARKIQRFLSQPFHVAEAFTGAPGKYVELKDTIKGFQEIVAGKHDDVPEQAFYLVGTIEEAIEKAKTLAV.

Residue 157–164 (GGAGVGKT) participates in ATP binding.

It belongs to the ATPase alpha/beta chains family. In terms of assembly, F-type ATPases have 2 components, CF(1) - the catalytic core - and CF(0) - the membrane proton channel. CF(1) has five subunits: alpha(3), beta(3), gamma(1), delta(1), epsilon(1). CF(0) has three main subunits: a(1), b(2) and c(9-12). The alpha and beta chains form an alternating ring which encloses part of the gamma chain. CF(1) is attached to CF(0) by a central stalk formed by the gamma and epsilon chains, while a peripheral stalk is formed by the delta and b chains.

Its subcellular location is the cell inner membrane. It carries out the reaction ATP + H2O + 4 H(+)(in) = ADP + phosphate + 5 H(+)(out). Functionally, produces ATP from ADP in the presence of a proton gradient across the membrane. The catalytic sites are hosted primarily by the beta subunits. This chain is ATP synthase subunit beta, found in Geotalea uraniireducens (strain Rf4) (Geobacter uraniireducens).